Reading from the N-terminus, the 663-residue chain is MSDRSSLFDVRSSTSVTLDQVVRRDTVEIPDEAALAMPVQPLSFWQGGARRATALTQDMNLRRWMLGLMTIAMGVAGWKASFDTIALGGVTRLEAVVLTLLAPLFLALSLWFCTALIGFVVLMGRPKDPLGIDSEAPMPKLHTRTAILMPVYNEDAAAVFARLRAMDASIAETGSARNFDIFVISDTRDAQVALAEQACFARFRREANCNVYYRIRKENTGRKAGNVADWVSRWGSAYEHMLVLDADSLMTGEAMVRLADAMERHPGAGLIQTMPMIINGQTIFARTLQFATRLYGRVAWTGLAWWSGSESSFWGHNAIVRTRAFAETCGLPHLPGPKPFGGEVMSHDALESALLRRGGWSVHLAPYLDGSYEESPSNLLDFATRDRRWCRGNIQHVPLIALPGLHWMSRMHLVIGVLSYALSPLWFFCLSAGLISRALMPELKKAAFTMADLKAAAHALIDWSEIQATAWAMIITFVLLFGPKILGAILVLARKGEVKGFGGKRRMAAGLGVEMLLSALVAPMLMFTQTRAIVEILAGKVGGWAAQRRDADKVDFKEAWAAMGWISLSGLILAASFWFTPDLLTATAPILAGLVLAVPLTMLGAHKVAGLKLKANGLFMTPEERRPPAIVRAAVGAACEPPIRWFARNGRPIGPTTKIRDAA.

A run of 6 helical transmembrane segments spans residues W64 to A86, L101 to M123, L413 to I435, A470 to L492, E558 to T580, and L584 to H606.

Belongs to the glycosyltransferase 2 family. OpgH subfamily.

The protein localises to the cell inner membrane. Its pathway is glycan metabolism; osmoregulated periplasmic glucan (OPG) biosynthesis. Functionally, involved in the biosynthesis of osmoregulated periplasmic glucans (OPGs). This is Glucans biosynthesis glucosyltransferase H from Caulobacter vibrioides (strain ATCC 19089 / CIP 103742 / CB 15) (Caulobacter crescentus).